The sequence spans 2014 residues: MEASDQSQAKLTLSFGGIQHAFSVPIEDLSALQDQKDAFLRSRSQASLSETREPCSPAELMLDYLEFLSCRNLPPPLTKPVLLAFSRNFLHNTEIHSLLAKPEYTPQTRRRLVRTYYMAALSAAESHVKESALLDAARQGNFQLAAVFGGQSTANPACVRELAELFAAYTPFLGDLISTAAPTLSALCRLPETKEHFCGRHIDIETWLHDPASIPDGDFIATAPVSCPVVGLLNLAHYAVTCHVLGKTPGELRSHLQGVTGHSQGIVAAVAISLSDSWESFYEAARMTVETLFWIGFECHQRSPRTSVSLDQVQDSLQNGHGRPSCMLSIVGLSRAHIQDILLKLNRSLPEDEQVYLALDNARDSFVVAGPSCSLVHLHTYLRSLKADASIDQTRIPHSLRKPTVQHQFLPISVPFHTPYLQEAARAIKERLFPWRVVSGKLTIPVYDNRTGNDLRKSDNVNLIHTMVDSICWEPCSWPAALGIENISHIVAFGSGGVGELAMRLKDGQGVRVIIGSEFQSRDEEIGTKADLFSPTLLASSTIVGSWGERFRPRLSKSPTGEVKIETKLSRLLDTPPLMVAGMTPTTAAWDFVSAITNAGYHVELAGGGYYDMDAMAVAVKKLVASIPPGRGITCNVIYASPQTLSGQVTLLRRLSSQGLPIDGLTIGAGIPSLEVVSEYIQALGLRHISLKPGSITAIREVIEIAKAHPDFPIILQWTGGRGGGHHSFEDFHAPILRTYGALRRCSNIILVAGSGFGGSEDTYPYLSGTWSAQYGLPAMPFDGILLGSRIMVAKEAHTSPAAKRLITEASGVSDSDWEKTYQEATGGVITVVSEMGQPIHKIATRGVLFWAEMDKTIFSLPRTKRVPELLKRRDYIIKRLNADFAKPWFGQNSKGEPVDLSEMTYIEVLRRLVALMYVSHQSRWIDPSYMTLLMDVSVRILERFSIVDELDDALVLREPHRFVENIVRLCPPAAHDILSPEDVAWFLLRCKARGQKPVNFIPALDDDFETFFKKDSLWQSEDVDALIDQDAGRCCILHGPVAAQYSQDRDEPAKEILDGITQSWIDMIRHDFYPGGVTPSSDSGSLSSESWSVLTPDLTSRDESALLDIIPEMQAYCPSISSLGRSGSPWIHALLSDEFILQGRDRRPNPCRRVFHFGPGGSLQFDRAKSEITVSMENHAGNRSVMRIVCENGADISVDLQQPSAYTDEMVSLPLKFQYDPGMVPVGISEVMEGRNERIKSFYSKVWFGEDICRGMNARSVFHGSEMALTEAMHRDLLSTVSLAYPHSETALSGVDVFPISVGMFPVWDAMARPLVVNDIDGDLLRLVHESNTFEYCEASTPLRVGDVVSSTAAVRAVYIEDAGKHVVVEASIERSGKPVMKVVSTFLFKGVFNDWNSTFKTNKEPELVLDVQSDLDELVLRDREWLLLHDPSQSLVGCSLLFRLETQVTWKNRNTYRSLDVSGLVFLQQASDDLKEIGAVAFHAGECVGNPVLSFLQRKGSPATSPTPLTSPGWPGVSSLEVQLPTSNEMYTRTSRDYNPIHVSPLFSQWADLPGTITQGMYTSAISAAVLEHLALNGDRRRFRRFSARFTDMVLPGDRLLVNVKHVGSIQGRMLFNVSAFKQATNNMVLEAEAELEQPPTAFFFTGQGSQKPNMGMDLYNSSPVAKAIWDEADKYIFETYGWSILDIVKNNPKTLTIHFRGKHGRKIRANYLSMENKTVTPDGQIVKKPILPGLTDQTQSYTFTEPSGLLFFSTFAQPSIVVMEKATFEDMRSKGLIPQSAVFAGHSLGEYGALLAFSGFMSVRNLVDLVFYRGLSMQFAMERDERGETNFGMVAASPQRVGKSDAVFTESHLRSLVQMISIASHELLEMVNLNIENEQYVCAGTDTETQLLLEEMSTTEDRTTTKLYKLILKSIPATKKLPMPIRLQRGRCTIPIPGIDVPFHSSYLRSTVSSYRKILQQYISEEDVHLERLVGRWIPNVTAKPFMADEGYVREVFNITQSPILKEMLEL.

Residues Leu144–Ile515 are acetyltransferase (AT) domain. Ser263 (for acetyltransferase activity) is an active-site residue. Positions Ser570 to Asp815 are enoyl reductase (ER) domain. The tract at residues Arg1126–Val1606 is dehydratase (DH) domain. Positions Pro1514 to Thr1627 constitute a MaoC-like domain. The tract at residues Phe1645–Ser2005 is malonyl/palmitoyl transferase (MT/PT) domain. The For malonyltransferase activity role is filled by Ser1790.

This sequence belongs to the fungal fatty acid synthetase subunit beta family. As to quaternary structure, [Alpha(6)beta(6)] hexamers of two multifunctional subunits (alpha and beta).

The catalysed reaction is acetyl-CoA + n malonyl-CoA + 2n NADPH + 4n H(+) = a long-chain-acyl-CoA + n CoA + n CO2 + 2n NADP(+).. It catalyses the reaction holo-[ACP] + acetyl-CoA = acetyl-[ACP] + CoA. It carries out the reaction holo-[ACP] + malonyl-CoA = malonyl-[ACP] + CoA. The enzyme catalyses a (3R)-hydroxyacyl-[ACP] = a (2E)-enoyl-[ACP] + H2O. The catalysed reaction is a 2,3-saturated acyl-[ACP] + NAD(+) = a (2E)-enoyl-[ACP] + NADH + H(+). It catalyses the reaction (9Z)-octadecenoyl-[ACP] + H2O = (9Z)-octadecenoate + holo-[ACP] + H(+). It functions in the pathway secondary metabolite biosynthesis. Functionally, fatty acid synthase subunit beta; part of the gene cluster that mediates the biosynthesis of azaphilone pigments (MonAzPs), a complex mixture of compounds with a common azaphilone skeleton very widely used as food colorants. PigJ and pigK form the two subunits of a dedicated fungal fatty acid synthase (FAS) that produces the side chain fatty acyl moiety of MonAzPs, a beta-keto fatty acid. The chain length control of the pigJ-pigK FAS is somewhat flexible as MonAzPs features either a beta-ketooctanoic or a beta-ketodecanoic acid moiety. The beta-ketoacyl-ACP probably serves as the substrate for the acetyltransferase pigD that directly transfers the fatty acyl chain to the C-4 alcohol of the pyran ring. The first step of the pathway is performed by the nrPKS pigA that forms the hexaketide precursor from successive condensations of five malonyl-CoA units, with a simple acetyl-CoA starter unit. The role of esterase pigG is not clear, but it may play at most a supplementary role in the formation of the benzaldehyde produced by the pigA nrPKS. This very reactive benzaldehyde is intercepted by the pigC ketoreductase that to provide the first stable enzyme-free MonAzPs intermediate, 6-(4-hydroxy-2-oxopentyl)-3-methyl-2,4-dioxocyclohexane carbaldehyde, also known as M7PKS-1. The FAD-dependent monooxygenase pigN hydroxylates M7PKS-1 at C-4, which triggers the formation of the pyran ring. PigJ, pigK and pigD are involved in the acetylation of the pyran ring. PigJ and pigK form the two subunits of a dedicated fungal FAS that produces the side chain fatty acyl moiety of MonAzPs and pigD transfers the fatty acyl chain to the C-4 alcohol. PigM and pigO are involved in the elimination of the omega-1 alcohol. PigM acts as an O-acetyltransferase that synthesizes the putative O-11 acetyl intermediate whereas pigO eliminates acetic acid to yield an intermediate with a C10(11) double bond. The dehydration of the C-11 alcohol followed by the reduction of the C6(7) double bond by the NAD(P)H-dependent oxidoreductase pigE increases the electrophilicity of the C-5 ketone of the resulting acyl benzopyran. This in turn sets up the C-5 ketone for an intramolecular Knoevenagel aldol condensation with the C-20 enol of the side chain. This condensation affords the characteristic linear tricyclic carbon skeletons of the yellow pigments that serve as the common precursors for the classical yellow pigments monascin and ankaflavin, orange pigments rubopunctatin and monascorubrin, and red pigments ribropunctamine and monascorubramine. The FAD-dependent oxidoreductase pigF is especially invoved in the biosynthesis of orange and red pigments via desaturation of C6(7). This Monascus ruber (Mold) protein is Fatty acid synthase beta subunit pigK.